We begin with the raw amino-acid sequence, 992 residues long: UvrABC system protein A (992 aa).

The segment covering 1–11 has biased composition (polar residues); that stretch reads MPKNSSTTVSS. A disordered region spans residues 1–30; that stretch reads MPKNSSTTVSSAVEAHAGGLASGPGGARSG. 62–69 provides a ligand contact to ATP; that stretch reads GLSGSGKS. The segment at 302–330 adopts a C4-type; atypical zinc-finger fold; that stretch reads CPNGHEQTVDEIEPRSFSFNNPFGACPEC. 2 ABC transporter domains span residues 360-639 and 659-988; these read WSLG…TRSV and PEKG…RFLA. Residue 692–699 participates in ATP binding; that stretch reads GVSGSGKS. The segment at 791 to 817 adopts a C4-type zinc-finger fold; it reads CEACAGDGTLKIEMNFLPDVYVPCEVC.

This sequence belongs to the ABC transporter superfamily. UvrA family. Forms a heterotetramer with UvrB during the search for lesions.

It is found in the cytoplasm. The UvrABC repair system catalyzes the recognition and processing of DNA lesions. UvrA is an ATPase and a DNA-binding protein. A damage recognition complex composed of 2 UvrA and 2 UvrB subunits scans DNA for abnormalities. When the presence of a lesion has been verified by UvrB, the UvrA molecules dissociate. This Micrococcus luteus (Micrococcus lysodeikticus) protein is UvrABC system protein A.